We begin with the raw amino-acid sequence, 280 residues long: Probable endonuclease 4 (280 aa).

Positions 68, 108, 143, 177, 180, 214, 227, 229, and 259 each coordinate Zn(2+).

It belongs to the AP endonuclease 2 family. Zn(2+) is required as a cofactor.

It catalyses the reaction Endonucleolytic cleavage to 5'-phosphooligonucleotide end-products.. In terms of biological role, endonuclease IV plays a role in DNA repair. It cleaves phosphodiester bonds at apurinic or apyrimidinic (AP) sites, generating a 3'-hydroxyl group and a 5'-terminal sugar phosphate. In Cenarchaeum symbiosum (strain A), this protein is Probable endonuclease 4.